A 558-amino-acid polypeptide reads, in one-letter code: Tyrosine N-monooxygenase (558 aa).

Residues 13–33 traverse the membrane as a helical segment; that stretch reads VLAAPLLSSSAILKLLLFVVT. A disordered region spans residues 48–67; that stretch reads TTKCSSTTCASPPAGVGNPP. Residues 49–65 are compositionally biased toward low complexity; that stretch reads TKCSSTTCASPPAGVGN. Residues arginine 138, arginine 167, histidine 422, arginine 491, and cysteine 493 each coordinate heme b.

The protein belongs to the cytochrome P450 family. Heme b serves as cofactor.

The protein localises to the endoplasmic reticulum membrane. The enzyme catalyses L-tyrosine + 2 reduced [NADPH--hemoprotein reductase] + 2 O2 = (E)-4-hydroxyphenylacetaldehyde oxime + 2 oxidized [NADPH--hemoprotein reductase] + CO2 + 3 H2O + 2 H(+). It catalyses the reaction L-tyrosine + reduced [NADPH--hemoprotein reductase] + O2 = N-hydroxy-L-tyrosine + oxidized [NADPH--hemoprotein reductase] + H2O + 2 H(+). The catalysed reaction is N-hydroxy-L-tyrosine + reduced [NADPH--hemoprotein reductase] + O2 = N,N-dihydroxy-L-tyrosine + oxidized [NADPH--hemoprotein reductase] + H2O + H(+). It carries out the reaction N,N-dihydroxy-L-tyrosine + H(+) = (E)-4-hydroxyphenylacetaldehyde oxime + CO2 + H2O. The protein operates within secondary metabolite biosynthesis; dhurrin biosynthesis; dhurrin from L-tyrosine: step 1/3. In terms of biological role, cytochrome P450 involved in the biosynthesis of the cyanogenic glucoside dhurrin. Catalyzes the conversion of L-tyrosine to p-hydroxyphenylacetaldehyde oxime, via the N-hydroxy-L-tyrosine and N,N-dihydroxy-L-tyrosine intermediates. Produces the (E) isomer of the final oxime product. This is Tyrosine N-monooxygenase (CYP79A1) from Sorghum bicolor (Sorghum).